The following is a 151-amino-acid chain: Small ribosomal subunit protein bS6 (151 aa).

The interval 94-151 is disordered; sequence EEHEQGPSAMMRKRDDDDRGERGERPRGPRPERGERGERGERGPRRPREDNIGEEGLY. The span at 105-144 shows a compositional bias: basic and acidic residues; the sequence is RKRDDDDRGERGERPRGPRPERGERGERGERGPRRPREDN.

This sequence belongs to the bacterial ribosomal protein bS6 family.

In terms of biological role, binds together with bS18 to 16S ribosomal RNA. The chain is Small ribosomal subunit protein bS6 from Beijerinckia indica subsp. indica (strain ATCC 9039 / DSM 1715 / NCIMB 8712).